The chain runs to 319 residues: ATP-dependent 6-phosphofructokinase (319 aa).

Gly-11 is an ATP binding site. Residue Arg-21–Arg-25 participates in ADP binding. ATP contacts are provided by residues Arg-72 to Tyr-73 and Gly-102 to Ser-105. Mg(2+) is bound at residue Asp-103. Thr-125–Asp-127 contributes to the substrate binding site. Asp-127 acts as the Proton acceptor in catalysis. Arg-154 provides a ligand contact to ADP. Substrate contacts are provided by residues Arg-162 and Met-169–Arg-171. Residues Gly-185–Glu-187, Arg-211, and Lys-213–His-215 each bind ADP. Residues Glu-222, Arg-243, and His-249–Arg-252 contribute to the substrate site.

Belongs to the phosphofructokinase type A (PFKA) family. ATP-dependent PFK group I subfamily. Prokaryotic clade 'B1' sub-subfamily. In terms of assembly, homotetramer. Requires Mg(2+) as cofactor.

The protein localises to the cytoplasm. It catalyses the reaction beta-D-fructose 6-phosphate + ATP = beta-D-fructose 1,6-bisphosphate + ADP + H(+). It functions in the pathway carbohydrate degradation; glycolysis; D-glyceraldehyde 3-phosphate and glycerone phosphate from D-glucose: step 3/4. With respect to regulation, allosterically activated by ADP and other diphosphonucleosides, and allosterically inhibited by phosphoenolpyruvate. In terms of biological role, catalyzes the phosphorylation of D-fructose 6-phosphate to fructose 1,6-bisphosphate by ATP, the first committing step of glycolysis. The polypeptide is ATP-dependent 6-phosphofructokinase (Listeria monocytogenes serotype 4b (strain CLIP80459)).